The primary structure comprises 172 residues: Adenine phosphoribosyltransferase (172 aa).

This sequence belongs to the purine/pyrimidine phosphoribosyltransferase family. In terms of assembly, homodimer.

Its subcellular location is the cytoplasm. The enzyme catalyses AMP + diphosphate = 5-phospho-alpha-D-ribose 1-diphosphate + adenine. The protein operates within purine metabolism; AMP biosynthesis via salvage pathway; AMP from adenine: step 1/1. Functionally, catalyzes a salvage reaction resulting in the formation of AMP, that is energically less costly than de novo synthesis. The chain is Adenine phosphoribosyltransferase from Roseiflexus sp. (strain RS-1).